We begin with the raw amino-acid sequence, 112 residues long: Small capsomere-interacting protein (112 aa).

It belongs to the herpesviridae small capsomere-interacting protein family. Interacts with the major capsid protein/MCP. Interacts with host TSPAN7; this interaction may be responsible for the presence of TSPAN7 in extracellular virions. Interacts with host MAPRE3 and DYNLT1; these interactions mediate retrograde transport of viral capsids.

The protein resides in the virion. Its subcellular location is the host nucleus. Participates in the assembly of the infectious particles by decorating the outer surface of the capsid shell and thus forming a layer between the capsid and the tegument. Complexes composed of the major capsid protein and small capsomere-interacting protein/SCP assemble together in the host cytoplasm and are translocated to the nucleus, where they accumulate and participate in capsid assembly. Interaction with host dynein light chains suggests a possible function in the retrogarde transport of incoming viral capsids. The chain is Small capsomere-interacting protein from Human herpesvirus 1 (strain 17) (HHV-1).